Here is a 612-residue protein sequence, read N- to C-terminus: Chaperone protein DnaK (612 aa).

The residue at position 174 (T174) is a Phosphothreonine; by autocatalysis. Positions 578 to 612 (GGQTGGATNTDSAGQGTTQDNVYEANYKVEDDDNK) are disordered. Over residues 586 to 598 (NTDSAGQGTTQDN) the composition is skewed to polar residues.

It belongs to the heat shock protein 70 family.

Its function is as follows. Acts as a chaperone. This Thermoanaerobacter sp. (strain X514) protein is Chaperone protein DnaK.